The following is a 46-amino-acid chain: Amine oxidase [flavin-containing] A (46 aa).

Belongs to the flavin monoamine oxidase family. In terms of assembly, monomer, homo- or heterodimer (containing two subunits of similar size). Each subunit contains a covalently bound flavin. Enzymatically active as monomer. FAD serves as cofactor.

It localises to the mitochondrion outer membrane. It carries out the reaction a secondary aliphatic amine + O2 + H2O = a primary amine + an aldehyde + H2O2. It catalyses the reaction a primary methyl amine + O2 + H2O = an aldehyde + H2O2 + NH4(+). The catalysed reaction is (R)-adrenaline + O2 + H2O = (R)-3,4-dihydroxymandelaldehyde + methylamine + H2O2. The enzyme catalyses dopamine + O2 + H2O = 3,4-dihydroxyphenylacetaldehyde + H2O2 + NH4(+). It carries out the reaction tyramine + O2 + H2O = (4-hydroxyphenyl)acetaldehyde + H2O2 + NH4(+). It catalyses the reaction (R)-noradrenaline + O2 + H2O = (R)-3,4-dihydroxymandelaldehyde + H2O2 + NH4(+). The catalysed reaction is serotonin + O2 + H2O = (5-hydroxyindol-3-yl)acetaldehyde + H2O2 + NH4(+). The enzyme catalyses kynuramine + O2 + H2O = 3-(2-aminophenyl)-3-oxopropanal + H2O2 + NH4(+). It carries out the reaction tryptamine + O2 + H2O = indole-3-acetaldehyde + H2O2 + NH4(+). It catalyses the reaction 2-phenylethylamine + O2 + H2O = 2-phenylacetaldehyde + H2O2 + NH4(+). Its function is as follows. Catalyzes the oxidative deamination of primary and some secondary amine such as neurotransmitters, with concomitant reduction of oxygen to hydrogen peroxide and has important functions in the metabolism of neuroactive and vasoactive amines in the central nervous system and peripheral tissues. Preferentially oxidizes serotonin. Also catalyzes the oxidative deamination of kynuramine to 3-(2-aminophenyl)-3-oxopropanal that can spontaneously condense to 4-hydroxyquinoline. This Ovis aries (Sheep) protein is Amine oxidase [flavin-containing] A.